The primary structure comprises 1868 residues: Protein TIC 214 (1868 aa).

6 helical membrane-spanning segments follow: residues 11–31, 64–84, 87–107, 126–146, 166–186, and 221–241; these read LLLL…YYGF, FIMG…HLAL, PHTL…FFWN, LSIQ…HFIL, ILFV…LMKS, and IFSI…PSPI. Over residues 248 to 276 the composition is skewed to basic and acidic residues; sequence ESSKGEEKKKTEKERDVEMETISKTKKIE. Disordered regions lie at residues 248-277, 617-643, 658-700, 782-806, and 1537-1607; these read ESSK…KIEQ, FDFE…GIRS, DEDT…QAEE, TSDY…KRKE, and YIDP…RKKK. Over residues 617-636 the composition is skewed to acidic residues; the sequence is FDFEEEEEEEEEEDDEEEPT. The segment covering 674-683 has biased composition (polar residues); sequence AKNSDQAKNS. 3 stretches are compositionally biased toward basic and acidic residues: residues 684 to 700, 789 to 806, and 1537 to 1576; these read DQAK…QAEE, GAKE…KRKE, and YIDP…ERQH.

This sequence belongs to the TIC214 family. In terms of assembly, part of the Tic complex.

It is found in the plastid. The protein localises to the chloroplast inner membrane. Its function is as follows. Involved in protein precursor import into chloroplasts. May be part of an intermediate translocation complex acting as a protein-conducting channel at the inner envelope. The chain is Protein TIC 214 from Nuphar advena (Common spatterdock).